Consider the following 63-residue polypeptide: Large ribosomal subunit protein eL37 (63 aa).

Zn(2+) is bound by residues cysteine 20, cysteine 23, cysteine 35, and cysteine 38. Residues 20 to 38 (CRRCGRHSFNVRKGYCVAC) form a C4-type zinc finger.

It belongs to the eukaryotic ribosomal protein eL37 family. It depends on Zn(2+) as a cofactor.

Functionally, binds to the 23S rRNA. This is Large ribosomal subunit protein eL37 from Ignicoccus hospitalis (strain KIN4/I / DSM 18386 / JCM 14125).